A 380-amino-acid polypeptide reads, in one-letter code: Chaperone protein DnaJ (380 aa).

The region spanning Asp-5–Gly-70 is the J domain. A CR-type zinc finger spans residues Gly-135–Thr-213. Residues Cys-148, Cys-151, Cys-165, Cys-168, Cys-187, Cys-190, Cys-201, and Cys-204 each contribute to the Zn(2+) site. CXXCXGXG motif repeat units follow at residues Cys-148–Gly-155, Cys-165–Gly-172, Cys-187–Gly-194, and Cys-201–Gly-208.

This sequence belongs to the DnaJ family. In terms of assembly, homodimer. The cofactor is Zn(2+).

It localises to the cytoplasm. Participates actively in the response to hyperosmotic and heat shock by preventing the aggregation of stress-denatured proteins and by disaggregating proteins, also in an autonomous, DnaK-independent fashion. Unfolded proteins bind initially to DnaJ; upon interaction with the DnaJ-bound protein, DnaK hydrolyzes its bound ATP, resulting in the formation of a stable complex. GrpE releases ADP from DnaK; ATP binding to DnaK triggers the release of the substrate protein, thus completing the reaction cycle. Several rounds of ATP-dependent interactions between DnaJ, DnaK and GrpE are required for fully efficient folding. Also involved, together with DnaK and GrpE, in the DNA replication of plasmids through activation of initiation proteins. This Aliivibrio salmonicida (strain LFI1238) (Vibrio salmonicida (strain LFI1238)) protein is Chaperone protein DnaJ.